A 211-amino-acid polypeptide reads, in one-letter code: tRNA (guanine-N(7)-)-methyltransferase (211 aa).

Positions 40, 65, 92, and 118 each coordinate S-adenosyl-L-methionine. The active site involves aspartate 118. Positions 122 and 154 each coordinate substrate.

This sequence belongs to the class I-like SAM-binding methyltransferase superfamily. TrmB family.

It catalyses the reaction guanosine(46) in tRNA + S-adenosyl-L-methionine = N(7)-methylguanosine(46) in tRNA + S-adenosyl-L-homocysteine. It participates in tRNA modification; N(7)-methylguanine-tRNA biosynthesis. Functionally, catalyzes the formation of N(7)-methylguanine at position 46 (m7G46) in tRNA. This is tRNA (guanine-N(7)-)-methyltransferase from Microcystis aeruginosa (strain NIES-843 / IAM M-2473).